The sequence spans 163 residues: NADH-quinone oxidoreductase subunit I (163 aa).

4Fe-4S ferredoxin-type domains are found at residues 53–83 (LRRY…IEAG) and 94–123 (VRYD…EGPN). Positions 63, 66, 69, 73, 103, 106, 109, and 113 each coordinate [4Fe-4S] cluster.

Belongs to the complex I 23 kDa subunit family. As to quaternary structure, NDH-1 is composed of 14 different subunits. Subunits NuoA, H, J, K, L, M, N constitute the membrane sector of the complex. It depends on [4Fe-4S] cluster as a cofactor.

The protein resides in the cell inner membrane. It carries out the reaction a quinone + NADH + 5 H(+)(in) = a quinol + NAD(+) + 4 H(+)(out). Its function is as follows. NDH-1 shuttles electrons from NADH, via FMN and iron-sulfur (Fe-S) centers, to quinones in the respiratory chain. The immediate electron acceptor for the enzyme in this species is believed to be ubiquinone. Couples the redox reaction to proton translocation (for every two electrons transferred, four hydrogen ions are translocated across the cytoplasmic membrane), and thus conserves the redox energy in a proton gradient. This is NADH-quinone oxidoreductase subunit I from Bartonella tribocorum (strain CIP 105476 / IBS 506).